A 314-amino-acid polypeptide reads, in one-letter code: Olfactory receptor 5G3 (314 aa).

The Extracellular portion of the chain corresponds to 1–24 (MEDKNQTVVTEFLLLGLTDHPYQK). The N-linked (GlcNAc...) asparagine glycan is linked to Asn-5. A helical transmembrane segment spans residues 25-45 (IVLFFMFLFVYLITLGGNLGM). The Cytoplasmic segment spans residues 46–97 (ITLIWIDPRLHTPMYFFLRHLSFVDICSSSSVVPKMLCNIFAEKKDITFLGC). A disulfide bridge links Cys-97 with Cys-179. Residues 98–118 (AAQMWFFGLFEAAECFLLAAM) traverse the membrane as a helical segment. At 119–143 (AYDRYVAICKPLLYTLIMSQQVCMQ) the chain is on the extracellular side. Residues 144–164 (LVVGPYAMALISTMTHTIFTF) traverse the membrane as a helical segment. At 165 to 167 (CLP) the chain is on the cytoplasmic side. A helical transmembrane segment spans residues 168 to 188 (FCGSNIINHFFCDIFPLLSLA). Residues 189 to 196 (CADTWVNK) lie on the Extracellular side of the membrane. Residues 197–217 (FVLFVLAGAIGVLSGLIIMVS) traverse the membrane as a helical segment. Residues 218–237 (YICILMTILKIQTADGKQKA) lie on the Cytoplasmic side of the membrane. A helical membrane pass occupies residues 238 to 258 (FFTCFSHLAAVSILYGTLFLI). At 259–268 (YVRPSSSSSL) the chain is on the extracellular side. The chain crosses the membrane as a helical span at residues 269–289 (GIYKVISLFYTVVIPMVNPLI). Residues 290 to 314 (YSLRNKEVKDAFRRKIERKKFIIGR) lie on the Cytoplasmic side of the membrane.

The protein belongs to the G-protein coupled receptor 1 family.

The protein resides in the cell membrane. Functionally, odorant receptor. In Homo sapiens (Human), this protein is Olfactory receptor 5G3 (OR5G3).